Consider the following 497-residue polypeptide: FAD-linked oxidoreductase fmqD (497 aa).

A signal peptide spans 1-17; sequence MQYIPFLISGLVPVALS. The FAD-binding PCMH-type domain occupies 68-243; the sequence is NDPSYVATVK…TSATYRIYDQ (176 aa). 3 N-linked (GlcNAc...) asparagine glycosylation sites follow: asparagine 99, asparagine 261, and asparagine 288.

Belongs to the oxygen-dependent FAD-linked oxidoreductase family.

It is found in the secreted. It localises to the cell wall. Its pathway is alkaloid biosynthesis. Its function is as follows. FAD-linked oxidoreductase; part of the gene cluster that mediates the biosynthesis of the antitumor fumiquinazolines that confer a dual-usage capability to defend against phagocytes in the environment and animal hosts. The simplest member is fumiquinazoline F (FQF) with a 6-6-6 tricyclic core derived from anthranilic acid (Ant), tryptophan (Trp), and alanine (Ala). The trimodular NRPS fmqA is responsible for FQF formation. Modules 1, 2 and 3 of fmqA are predicted to activate and load Ant, Trp and Ala, respectively, providing for the assembly of an Ant-Trp-Ala-S-enzyme intermediate that would undergo double cyclization for chain release and generation of the tricyclic 6-6-6 product fumiquinazoline F. The presence of an E domain predicted for module 2 of fmqA is consistent with epimerization of L-Trp to D-Trp during assembly to generate the R-stereocenter at C14 of FQF. The FAD-dependent monooxygenase fmqB and the monomodular NRPS fmqC then maturate FQF to FQA. FmqB oxidizes the 2',3'-double bond of the indole side chain of FQF, and fmqC activates L-Ala as the adenylate, installs it as the pantetheinyl thioester on its carrier protein domain, and acylates the oxidized indole for subsequent intramolecular cyclization to create the 6-5-5-imidazolindolone of FQA. The FAD-linked oxidoreductase fmqD introduces a third layer of scaffold complexity by converting FQA to the spirohemiaminal FQC, presumably by catalyzing the formation of a transient imine within the pyrazinone ring. FQC subsequently converts nonenzymatically to the known cyclic aminal FQD. This is FAD-linked oxidoreductase fmqD from Aspergillus fumigatus (strain ATCC MYA-4609 / CBS 101355 / FGSC A1100 / Af293) (Neosartorya fumigata).